The sequence spans 162 residues: Regulatory protein RecX (162 aa).

Belongs to the RecX family.

It is found in the cytoplasm. Its function is as follows. Modulates RecA activity. The chain is Regulatory protein RecX from Xanthomonas axonopodis pv. citri (strain 306).